Reading from the N-terminus, the 184-residue chain is uncharacterized protein (184 aa).

Residues 1–24 (MGISDQINSNLSSQSPFTVSTNPS) form a disordered region.

This is an uncharacterized protein from Dictyostelium discoideum (Social amoeba).